We begin with the raw amino-acid sequence, 375 residues long: Histidine biosynthesis bifunctional protein HisB (375 aa).

The histidinol-phosphatase stretch occupies residues 1–168; sequence MTPILFVDRD…GIAHELADAP (168 aa). Catalysis depends on D8, which acts as the Nucleophile. Residues D8, D10, and D128 each contribute to the Mg(2+) site. D10 serves as the catalytic Proton donor. Residues 169–375 form an imidazoleglycerol-phosphate dehydratase region; sequence RRAVVQRNTK…TALPSTKGAL (207 aa).

In the N-terminal section; belongs to the histidinol-phosphatase family. The protein in the C-terminal section; belongs to the imidazoleglycerol-phosphate dehydratase family. The cofactor is Mg(2+).

The protein localises to the cytoplasm. It carries out the reaction D-erythro-1-(imidazol-4-yl)glycerol 3-phosphate = 3-(imidazol-4-yl)-2-oxopropyl phosphate + H2O. It catalyses the reaction L-histidinol phosphate + H2O = L-histidinol + phosphate. The protein operates within amino-acid biosynthesis; L-histidine biosynthesis; L-histidine from 5-phospho-alpha-D-ribose 1-diphosphate: step 6/9. It functions in the pathway amino-acid biosynthesis; L-histidine biosynthesis; L-histidine from 5-phospho-alpha-D-ribose 1-diphosphate: step 8/9. The chain is Histidine biosynthesis bifunctional protein HisB from Xanthomonas campestris pv. campestris (strain B100).